Reading from the N-terminus, the 332-residue chain is Ferredoxin--NADP reductase 2 (332 aa).

Positions 37, 45, 50, 90, 124, 285, and 326 each coordinate FAD.

It belongs to the ferredoxin--NADP reductase type 2 family. Homodimer. Requires FAD as cofactor.

It carries out the reaction 2 reduced [2Fe-2S]-[ferredoxin] + NADP(+) + H(+) = 2 oxidized [2Fe-2S]-[ferredoxin] + NADPH. The polypeptide is Ferredoxin--NADP reductase 2 (yumC) (Bacillus subtilis (strain 168)).